The following is a 335-amino-acid chain: UPF0353 protein MAV335 (335 aa).

Transmembrane regions (helical) follow at residues 18 to 38 (WFFL…LMQL) and 67 to 87 (LPAI…AGPT). In terms of domain architecture, VWFA spans 98–295 (VVMLVIDVSQ…QELKSVYATL (198 aa)). A helical transmembrane segment spans residues 309 to 329 (SVGWVRLGALVLRLAADALLI).

The protein belongs to the UPF0353 family.

It is found in the cell membrane. In Mycobacterium avium, this protein is UPF0353 protein MAV335.